A 515-amino-acid chain; its full sequence is MDEFHRCGKEDSFWQQCFLYPLFFQEDLYAISHDHYLDVSSSSRPMEHLSSNDQLSFLTVKRLIGQIRQQNHSIVLFVNCDPNPLADRKKSFYSESVLEALTLVLEVPFSIWSKSSVEGMNECKSFRSIHSIFPFLEDKFPHSNSILDARIPYSIHPEILVRTFRRWIRDAPSLHPLRSVLYDYRNSPENLQRSIIVVPRVNTRFFLFLLNYYVCECESILFSRLKRSSHSRSLTHGSFPQRTHFHRKIKHIIIFSRRNSLKTIWSLKDPKIHYVRYGERPIIAIKGAHLLVKKCRYYLLIFRQFYFHLWSEPYRVCSHQLSKNCSSSPGYFLRVRMNPIFVRTKMLDELFIADLITNEMDPIVPIVPIIGLLATEKFCDISGRPISKLSWTSLTDDDILDRFDQIWRNLFHYYSGSFDRDGLYRIKYILSLSCAKTLACKHKSTIRVVRKELGPELFKKSFSKEREFDSLPFSSKAAARSQRERIWHSDIPQINPLANSWQKIQDLKIENLFDQ.

The protein belongs to the intron maturase 2 family. MatK subfamily.

It is found in the plastid. The protein localises to the chloroplast. Functionally, usually encoded in the trnK tRNA gene intron. Probably assists in splicing its own and other chloroplast group II introns. The chain is Maturase K from Pinus pinea (Italian stone pine).